Reading from the N-terminus, the 348-residue chain is Rhodopsin (348 aa).

M1 carries the post-translational modification N-acetylmethionine. The Extracellular portion of the chain corresponds to 1 to 36 (MNGTEGPNFYVPFSNKTGVVRSPFEAPQYYLAEPWQ). N2 and N15 each carry an N-linked (GlcNAc...) asparagine glycan. The helical transmembrane segment at 37–61 (FSMLAAYMFLLIMLGFPINFLTLYV) threads the bilayer. Topologically, residues 62-73 (TVQHKKLRTPLN) are cytoplasmic. A helical membrane pass occupies residues 74–96 (YILLNLAVADLFMVFGGFTTTLY). At 97-110 (TSLHGYFVFGPTGC) the chain is on the extracellular side. C110 and C187 are joined by a disulfide. The helical transmembrane segment at 111 to 133 (NLEGFFATLGGEIALWSLVVLAI) threads the bilayer. Residues 134-136 (ERY) carry the 'Ionic lock' involved in activated form stabilization motif. Residues 134–152 (ERYVVVCKPMSNFRFGENH) are Cytoplasmic-facing. Residues 153–173 (AIMGVAFTWVMALACAAPPLV) traverse the membrane as a helical segment. Residues 174–202 (GWSRYIPEGMQCSCGIDYYTPHEETNNES) lie on the Extracellular side of the membrane. E201 provides a ligand contact to Zn(2+). Residues 203 to 224 (FVIYMFVVHFIIPLIVIFFCYG) form a helical membrane-spanning segment. Topologically, residues 225-252 (QLVFTVKEAAAQQQESATTQKAEKEVTR) are cytoplasmic. The helical transmembrane segment at 253–274 (MVIIMVIAFLICWLPYAGVAFY) threads the bilayer. Topologically, residues 275 to 286 (IFTHQGSDFGPI) are extracellular. Residue Q279 participates in Zn(2+) binding. A helical membrane pass occupies residues 287-308 (FMTIPAFFAKTSAVYNPVIYIM). At K296 the chain carries N6-(retinylidene)lysine. Residues 309-348 (MNKQFRNCMVTTLCCGKNPLGDDEASTTVSKTETSQVAPA) lie on the Cytoplasmic side of the membrane. S-palmitoyl cysteine attachment occurs at residues C322 and C323. An interaction with SAG region spans residues 330–348 (DDEASTTVSKTETSQVAPA). Phosphoserine is present on S334. Phosphothreonine is present on residues T335 and T336. Position 338 is a phosphoserine (S338). Phosphothreonine is present on residues T340 and T342. At S343 the chain carries Phosphoserine; by RK and GRK7.

It belongs to the G-protein coupled receptor 1 family. Opsin subfamily. As to quaternary structure, homodimer. May form a complex composed of RHO, GRK1 and RCVRN in a Ca(2+)-dependent manner; RCVRN prevents the interaction between GRK1 and RHO. Interacts with GRK1. Interacts (phosphorylated form) with SAG. Interacts with GNAT1. Interacts with GNAT3. SAG and G-proteins compete for a common binding site. Interacts with PRCD; the interaction promotes PRCD stability. Forms a complex with ASAP1 and ARF4. Forms a complex with ASAP1, RAB11A, Rabin8/RAB3IP, ARF4 and RAB11FIP3; the complex regulates Golgi-to-cilia rhodopsin/RHO transport in photoreceptors. Post-translationally, phosphorylated on some or all of the serine and threonine residues present in the C-terminal region. Contains one covalently linked retinal chromophore. Upon light absorption, the covalently bound 11-cis-retinal is converted to all-trans-retinal. After hydrolysis of the Schiff base and release of the covalently bound all-trans-retinal, active rhodopsin is regenerated by binding of a fresh molecule of 11-cis-retinal. Expressed in rod-shaped photoreceptor cells in the retina that mediate vision in dim light (at protein level).

Its subcellular location is the membrane. The protein resides in the cell projection. The protein localises to the cilium. It localises to the photoreceptor outer segment. Its function is as follows. Photoreceptor required for image-forming vision at low light intensity. Required for photoreceptor cell viability after birth. Light-induced isomerization of 11-cis to all-trans retinal triggers a conformational change that activates signaling via G-proteins. Subsequent receptor phosphorylation mediates displacement of the bound G-protein alpha subunit by the arrestin SAG and terminates signaling. This Bos taurus (Bovine) protein is Rhodopsin (RHO).